A 415-amino-acid chain; its full sequence is MSFLKTSDPAVYNAIMQETTRLKETIDLIASENYTSKAVLEAQGSVFTNKYAEGYPGKRYYAGCEYADAIEELAIDRAKTLFHAEHANVQPHSGAQANMAAYFAMVKPGDTIMGLTLSHGGHLTHGSKANFTGKLYHVIEYGLNAETERIDYDNLEKLALEHRPRLIVTGASAYPRILDFERFRAICDKVDAKLMVDIAHIAGLVAAGLHPSPVPYADVVTSTSHKTLRGPRGGFILCKEQYAKAIDQAVFPVIQGGPLMQVVAAKAVAFQEAMQPGFVTYQKKILENTQVMAEELRKLGLRLVSGGTDNHLVLVDLSPIGVNGYDAQLALRRAGIVINRNTVPFAENQTANVPAGIRLGCPAATSRGFGPAEIRQTVSWIGKILKNIGNEDIEKQVLAEVIHLCRKFPVPGIDA.

Residues Leu-117 and 121-123 (GHL) contribute to the (6S)-5,6,7,8-tetrahydrofolate site. Lys-226 bears the N6-(pyridoxal phosphate)lysine mark.

The protein belongs to the SHMT family. As to quaternary structure, homodimer. Requires pyridoxal 5'-phosphate as cofactor.

It localises to the cytoplasm. The catalysed reaction is (6R)-5,10-methylene-5,6,7,8-tetrahydrofolate + glycine + H2O = (6S)-5,6,7,8-tetrahydrofolate + L-serine. The protein operates within one-carbon metabolism; tetrahydrofolate interconversion. It participates in amino-acid biosynthesis; glycine biosynthesis; glycine from L-serine: step 1/1. Its function is as follows. Catalyzes the reversible interconversion of serine and glycine with tetrahydrofolate (THF) serving as the one-carbon carrier. This reaction serves as the major source of one-carbon groups required for the biosynthesis of purines, thymidylate, methionine, and other important biomolecules. Also exhibits THF-independent aldolase activity toward beta-hydroxyamino acids, producing glycine and aldehydes, via a retro-aldol mechanism. The protein is Serine hydroxymethyltransferase of Dehalococcoides mccartyi (strain ATCC BAA-2266 / KCTC 15142 / 195) (Dehalococcoides ethenogenes (strain 195)).